Here is a 323-residue protein sequence, read N- to C-terminus: MRKSMGITVFGCEQDEANAFRTLSPDFHIIPTLISDAISADNAKLAAGNQCISVGHKSEVSEATILALRKVGVKYISTRSIGCNHIDTTAAERMGISVGTVAYSPDSVADYALMLMLMAIRGAKSTIHAVAQQNFRLDCVRGKELRDMTVGVIGTGHIGQAVVKRLRGFGCRVLAYDNSRKIEADYVQLDELLKNSDIVTLHVPLCADTRHLIGQRQIGEMKQGAFLINTGRGALVDTGSLVEALGSGKLGGAALDVLEGEDQFVYTDCSQKVLDHPFLSQLLRMPNVIITPHTAYYTERVLRDTTEKTIRNCLNFERSLQHE.

NAD(+) contacts are provided by residues 157–158 (HI), 230–232 (TGR), and aspartate 256. Residue arginine 232 is part of the active site. Glutamate 261 is an active-site residue. Catalysis depends on histidine 293, which acts as the Proton donor. 293-296 (HTAY) is a binding site for NAD(+).

It belongs to the D-isomer specific 2-hydroxyacid dehydrogenase family.

In terms of biological role, required for high-level resistance to glycopeptides antibiotics. Catalyzes the reduction of 2-keto acids to 2-D-hydroxy acids that give rise to peptidoglycan precursors that terminate in the depsipeptide D-alanine-2-lactate rather than the dipeptide D-alanine-D-alanine thus preventing vancomycin binding. This chain is D-specific alpha-keto acid dehydrogenase (vanHB), found in Enterococcus faecalis (strain ATCC 700802 / V583).